Reading from the N-terminus, the 410-residue chain is MNIINIFIPDLPESVTDATIIKWHKKKGDKVQEDTILVDIETDKVILEIPSPSDGILNSIIADKGKIVLPGQVIGTLLKIGIKNEEKIIKTTNNVVNTDNNQNINLKLLEKTYSPTVRRLISMHDLRDVDIIQGTGTKNRLTRKDILNYLKNIRSNTNKKINNYDLNAYNFNTTHKNHRSIKRVKMTRLRKKISERLLSTKNNTASLTTFNEVNMQSILNLRRKYGELFKQKHGIKLGLMSFYVKAVIEALKIFPEINASIDNDEIIYYNYFDISIAISTPRGLVTPVLKNADLMSMAEIEIKIKDFSEKGKNSKLTIDDLIGGNFTITNGGVFGSLFSTPLINPPQSAILGMHAIHKRPVIVDENIEVHPMMYLALSYDHRLIDGKESVGFLLKIKEFLEDFSRIVLNI.

One can recognise a Lipoyl-binding domain in the interval 3–81 (IINIFIPDLP…QVIGTLLKIG (79 aa)). N6-lipoyllysine is present on Lys44. Residues 112–150 (TYSPTVRRLISMHDLRDVDIIQGTGTKNRLTRKDILNYL) form the Peripheral subunit-binding (PSBD) domain. Catalysis depends on residues His381 and Asp385.

Belongs to the 2-oxoacid dehydrogenase family. As to quaternary structure, forms a 24-polypeptide structural core with octahedral symmetry. Part of the 2-oxoglutarate dehydrogenase (OGDH) complex composed of E1 (2-oxoglutarate dehydrogenase), E2 (dihydrolipoamide succinyltransferase) and E3 (dihydrolipoamide dehydrogenase); the complex contains multiple copies of the three enzymatic components (E1, E2 and E3). The cofactor is (R)-lipoate.

The catalysed reaction is N(6)-[(R)-dihydrolipoyl]-L-lysyl-[protein] + succinyl-CoA = N(6)-[(R)-S(8)-succinyldihydrolipoyl]-L-lysyl-[protein] + CoA. The protein operates within amino-acid degradation; L-lysine degradation via saccharopine pathway; glutaryl-CoA from L-lysine: step 6/6. Functionally, E2 component of the 2-oxoglutarate dehydrogenase (OGDH) complex which catalyzes the second step in the conversion of 2-oxoglutarate to succinyl-CoA and CO(2). The polypeptide is Dihydrolipoyllysine-residue succinyltransferase component of 2-oxoglutarate dehydrogenase complex (sucB) (Buchnera aphidicola subsp. Baizongia pistaciae (strain Bp)).